A 247-amino-acid chain; its full sequence is NAD-dependent protein deacetylase (247 aa).

The 247-residue stretch at 1–247 (METFKSILHE…EFARSLGMKK (247 aa)) folds into the Deacetylase sirtuin-type domain. The NAD(+) site is built by Ala20, Thr24, Phe31, Arg32, Gln100, Ile102, Asp103, and His118. Residue Phe31 participates in nicotinamide binding. Nicotinamide-binding residues include Ile102 and Asp103. Catalysis depends on His118, which acts as the Proton acceptor. Zn(2+) is bound by residues Cys126, Cys129, Cys146, and Cys156. The NAD(+) site is built by Thr192, Ser193, Asn218, and Ile236.

The protein belongs to the sirtuin family. Class U subfamily. Requires Zn(2+) as cofactor.

The protein resides in the cytoplasm. It catalyses the reaction N(6)-acetyl-L-lysyl-[protein] + NAD(+) + H2O = 2''-O-acetyl-ADP-D-ribose + nicotinamide + L-lysyl-[protein]. Its function is as follows. NAD-dependent protein deacetylase which modulates the activities of several enzymes which are inactive in their acetylated form. The polypeptide is NAD-dependent protein deacetylase (Bacillus subtilis (strain 168)).